Here is a 355-residue protein sequence, read N- to C-terminus: RNA 3'-terminal phosphate cyclase (355 aa).

ATP is bound by residues Gln-100 and 300 to 304 (HLADQ). The Tele-AMP-histidine intermediate role is filled by His-325.

The protein belongs to the RNA 3'-terminal cyclase family. Type 1 subfamily.

Its subcellular location is the cytoplasm. The enzyme catalyses a 3'-end 3'-phospho-ribonucleotide-RNA + ATP = a 3'-end 2',3'-cyclophospho-ribonucleotide-RNA + AMP + diphosphate. Functionally, catalyzes the conversion of 3'-phosphate to a 2',3'-cyclic phosphodiester at the end of RNA. The mechanism of action of the enzyme occurs in 3 steps: (A) adenylation of the enzyme by ATP; (B) transfer of adenylate to an RNA-N3'P to produce RNA-N3'PP5'A; (C) and attack of the adjacent 2'-hydroxyl on the 3'-phosphorus in the diester linkage to produce the cyclic end product. The biological role of this enzyme is unknown but it is likely to function in some aspects of cellular RNA processing. This Methanosarcina acetivorans (strain ATCC 35395 / DSM 2834 / JCM 12185 / C2A) protein is RNA 3'-terminal phosphate cyclase.